Here is a 306-residue protein sequence, read N- to C-terminus: Palmitoyl-protein thioesterase ABHD10, mitochondrial (306 aa).

The N-terminal 52 residues, 1–52 (MAVARLAAVAAWVPCRSWGCAAVPFGPHRGLSALLARIPQRAPRWLPACRQK), are a transit peptide targeting the mitochondrion. The AB hydrolase-1 domain maps to 78-177 (IIFIPGYLSY…KVVALLGVAT (100 aa)). Catalysis depends on charge relay system residues Ser152, Asp249, and His279.

This sequence belongs to the AB hydrolase superfamily.

It localises to the mitochondrion. It carries out the reaction S-hexadecanoyl-L-cysteinyl-[protein] + H2O = L-cysteinyl-[protein] + hexadecanoate + H(+). The catalysed reaction is mycophenolic acid O-acyl-beta-D-glucuronide + H2O = mycophenolate + D-glucuronate + H(+). With respect to regulation, inhibited by palmostatin-B. Acts as an acyl-protein thioesterase that hydrolyzes fatty acids from acylated residues in proteins. Regulates the mitochondrial S-depalmitoylation of the nucleophilic active site residue of peroxiredoxin-5/PRDX5, a key antioxidant protein, therefore modulating mitochondrial antioxidant ability. Also catalyzes the deglucuronidation of mycophenolic acid acyl-glucuronide, an active metabolite of the immunosuppressant drug mycophenolate. The protein is Palmitoyl-protein thioesterase ABHD10, mitochondrial (ABHD10) of Pongo abelii (Sumatran orangutan).